Consider the following 91-residue polypeptide: Small ribosomal subunit protein uS15 (91 aa).

This sequence belongs to the universal ribosomal protein uS15 family. Part of the 30S ribosomal subunit. Forms a bridge to the 50S subunit in the 70S ribosome, contacting the 23S rRNA.

Its function is as follows. One of the primary rRNA binding proteins, it binds directly to 16S rRNA where it helps nucleate assembly of the platform of the 30S subunit by binding and bridging several RNA helices of the 16S rRNA. Forms an intersubunit bridge (bridge B4) with the 23S rRNA of the 50S subunit in the ribosome. The protein is Small ribosomal subunit protein uS15 of Hydrogenobaculum sp. (strain Y04AAS1).